A 606-amino-acid chain; its full sequence is Prostaglandin G/H synthase 1 (606 aa).

The signal sequence occupies residues 1–30 (MSRSSPSLRLPVLLLLLLLLLLPPPPPVLP). The region spanning 38–76 (PVNPCCYFPCQHQGVCVRVALDRYQCDCTRTGYSGPNCT) is the EGF-like domain. Cystine bridges form between C42–C53, C43–C165, C47–C63, and C65–C75. N-linked (GlcNAc...) asparagine glycosylation is found at N74, N110, and N150. The active-site Proton acceptor is H213. Catalysis depends on Y391, which acts as the For cyclooxygenase activity. H394 serves as a coordination point for heme b. A glycan (N-linked (GlcNAc...) asparagine) is linked at N416. A disulfide bridge connects residues C575 and C581.

The protein belongs to the prostaglandin G/H synthase family. Homodimer. The cofactor is heme b.

Its subcellular location is the microsome membrane. The protein resides in the endoplasmic reticulum membrane. It carries out the reaction (5Z,8Z,11Z,14Z)-eicosatetraenoate + AH2 + 2 O2 = prostaglandin H2 + A + H2O. The enzyme catalyses (5Z,8Z,11Z,14Z)-eicosatetraenoate + 2 O2 = prostaglandin G2. It catalyses the reaction prostaglandin G2 + AH2 = prostaglandin H2 + A + H2O. The catalysed reaction is (9Z,12Z)-octadecadienoate + AH2 + O2 = (9R)-hydroxy-(10E,12Z)-octadecadienoate + A + H2O. It carries out the reaction (9Z,12Z)-octadecadienoate + AH2 + O2 = (9S)-hydroxy-(10E,12Z)-octadecadienoate + A + H2O. The enzyme catalyses (9Z,12Z)-octadecadienoate + AH2 + O2 = (13S)-hydroxy-(9Z,11E)-octadecadienoate + A + H2O. It catalyses the reaction (9Z,12Z)-octadecadienoate + AH2 + O2 = (13R)-hydroxy-(9Z,11E)-octadecadienoate + A + H2O. It participates in lipid metabolism; prostaglandin biosynthesis. Its activity is regulated as follows. The cyclooxygenase activity is inhibited by nonsteroidal anti-inflammatory drugs (NSAIDs) including ibuprofen, flurbiprofen, ketoprofen, naproxen, flurbiprofen, anirolac, fenclofenac and diclofenac. Its function is as follows. Dual cyclooxygenase and peroxidase that plays an important role in the biosynthesis pathway of prostanoids, a class of C20 oxylipins mainly derived from arachidonate ((5Z,8Z,11Z,14Z)-eicosatetraenoate, AA, C20:4(n-6)), with a particular role in the inflammatory response. The cyclooxygenase activity oxygenates AA to the hydroperoxy endoperoxide prostaglandin G2 (PGG2), and the peroxidase activity reduces PGG2 to the hydroxy endoperoxide prostaglandin H2 (PGH2), the precursor of all 2-series prostaglandins and thromboxanes. This complex transformation is initiated by abstraction of hydrogen at carbon 13 (with S-stereochemistry), followed by insertion of molecular O2 to form the endoperoxide bridge between carbon 9 and 11 that defines prostaglandins. The insertion of a second molecule of O2 (bis-oxygenase activity) yields a hydroperoxy group in PGG2 that is then reduced to PGH2 by two electrons. Involved in the constitutive production of prostanoids in particular in the stomach and platelets. In gastric epithelial cells, it is a key step in the generation of prostaglandins, such as prostaglandin E2 (PGE2), which plays an important role in cytoprotection. In platelets, it is involved in the generation of thromboxane A2 (TXA2), which promotes platelet activation and aggregation, vasoconstriction and proliferation of vascular smooth muscle cells. Can also use linoleate (LA, (9Z,12Z)-octadecadienoate, C18:2(n-6)) as substrate and produce hydroxyoctadecadienoates (HODEs) in a regio- and stereospecific manner, being (9R)-HODE ((9R)-hydroxy-(10E,12Z)-octadecadienoate) and (13S)-HODE ((13S)-hydroxy-(9Z,11E)-octadecadienoate) its major products. In Oryctolagus cuniculus (Rabbit), this protein is Prostaglandin G/H synthase 1 (PTGS1).